The sequence spans 276 residues: uncharacterized protein (276 aa).

The propeptide at 1–4 (MNRG) is leader sequence. The residue at position 5 (M5) is an N-methylmethionine. The helical transmembrane segment at 5–26 (MTLIELLVALALSIILSLGLYY) threads the bilayer.

Its subcellular location is the membrane. This is an uncharacterized protein from Aquifex aeolicus (strain VF5).